A 221-amino-acid chain; its full sequence is Hypoxanthine-guanine phosphoribosyltransferase (221 aa).

Ser-2 carries the post-translational modification N-acetylserine. Residues Lys-85, 110–118, Lys-159, and 188–194 contribute to the GMP site; these read DEVDDTRTT and WYAYPWE. The Proton acceptor role is filled by Asp-114.

Belongs to the purine/pyrimidine phosphoribosyltransferase family. Dimer. The cofactor is Mg(2+).

Its subcellular location is the cytoplasm. It is found in the nucleus. It catalyses the reaction IMP + diphosphate = hypoxanthine + 5-phospho-alpha-D-ribose 1-diphosphate. The enzyme catalyses GMP + diphosphate = guanine + 5-phospho-alpha-D-ribose 1-diphosphate. It participates in purine metabolism; IMP biosynthesis via salvage pathway; IMP from hypoxanthine: step 1/1. Its activity is regulated as follows. Subject to feedback inhibition by GMP. Converts guanine to guanosine monophosphate, and hypoxanthine to inosine monophosphate. Transfers the 5-phosphoribosyl group from 5-phosphoribosylpyrophosphate onto the purine. Plays a central role in the generation of purine nucleotides through the purine salvage pathway. The sequence is that of Hypoxanthine-guanine phosphoribosyltransferase (HPT1) from Saccharomyces cerevisiae (strain ATCC 204508 / S288c) (Baker's yeast).